We begin with the raw amino-acid sequence, 364 residues long: UDP-N-acetylglucosamine--N-acetylmuramyl-(pentapeptide) pyrophosphoryl-undecaprenol N-acetylglucosamine transferase (364 aa).

UDP-N-acetyl-alpha-D-glucosamine is bound by residues 10 to 12 (TGG), Asn-123, Ser-198, Ile-251, and Gln-296.

The protein belongs to the glycosyltransferase 28 family. MurG subfamily.

It is found in the cell membrane. The enzyme catalyses di-trans,octa-cis-undecaprenyl diphospho-N-acetyl-alpha-D-muramoyl-L-alanyl-D-glutamyl-meso-2,6-diaminopimeloyl-D-alanyl-D-alanine + UDP-N-acetyl-alpha-D-glucosamine = di-trans,octa-cis-undecaprenyl diphospho-[N-acetyl-alpha-D-glucosaminyl-(1-&gt;4)]-N-acetyl-alpha-D-muramoyl-L-alanyl-D-glutamyl-meso-2,6-diaminopimeloyl-D-alanyl-D-alanine + UDP + H(+). It functions in the pathway cell wall biogenesis; peptidoglycan biosynthesis. Cell wall formation. Catalyzes the transfer of a GlcNAc subunit on undecaprenyl-pyrophosphoryl-MurNAc-pentapeptide (lipid intermediate I) to form undecaprenyl-pyrophosphoryl-MurNAc-(pentapeptide)GlcNAc (lipid intermediate II). The polypeptide is UDP-N-acetylglucosamine--N-acetylmuramyl-(pentapeptide) pyrophosphoryl-undecaprenol N-acetylglucosamine transferase (Exiguobacterium sibiricum (strain DSM 17290 / CCUG 55495 / CIP 109462 / JCM 13490 / 255-15)).